The chain runs to 238 residues: MKIDVLTLFPEMFHALDHSIVGRAKTLGQVEMSFLNFRDFSTNKHHKVDDYPYGGGAGMLLTPQPIFDAFHSLEAKSPRVILTTPTGKPFNQRMAEVWAKEEHLVFLCGHYEGFDQRIHDELATDEVSIGDFVLTGGELATMVMIDATVRLIPDVLNAQASHEDDSFSTGLLEYPHYTRPADFRGLTVPDVLLSGNHARIEAWRREQSLERTYRRRPDLLEHVELTDVDKKFLQSLRD.

Residues glycine 109 and 129-134 (IGDFVL) each bind S-adenosyl-L-methionine.

It belongs to the RNA methyltransferase TrmD family. In terms of assembly, homodimer.

The protein localises to the cytoplasm. The catalysed reaction is guanosine(37) in tRNA + S-adenosyl-L-methionine = N(1)-methylguanosine(37) in tRNA + S-adenosyl-L-homocysteine + H(+). In terms of biological role, specifically methylates guanosine-37 in various tRNAs. This chain is tRNA (guanine-N(1)-)-methyltransferase, found in Exiguobacterium sp. (strain ATCC BAA-1283 / AT1b).